The following is a 263-amino-acid chain: LIM and SH3 domain protein 1 (263 aa).

N-acetylmethionine is present on Met-1. An LIM zinc-binding domain is found at 5–56 (CARCGKIVYPTEKVNCLDKYWHKACFHCETCKMTLNMKNYKGYEKKPYCNAH). The residue at position 42 (Lys-42) is an N6-acetyllysine. Nebulin repeat units follow at residues 61 to 95 (SFTM…KNKG) and 97 to 131 (GFSV…KSRM). Position 68 is a phosphothreonine (Thr-68). N6-methyllysine is present on Lys-75. Position 99 is a phosphoserine (Ser-99). Thr-104 is modified (phosphothreonine). Lys-112 carries the N6-succinyllysine modification. A phosphoserine mark is found at Ser-118 and Ser-134. The segment at 123–207 (HEEFEKSRMG…QRSAPGGGGK (85 aa)) is disordered. Polar residues predominate over residues 148-162 (DSSSYRRPTEQQQPQ). Thr-156 is subject to Phosphothreonine; by PKA. The region spanning 204–263 (GGGKRYRAVYDYSAADEDEVSFQDGDTIVNVQQIDDGWMYGTVERTGDTGMLPANYVEAI) is the SH3 domain.

As to quaternary structure, interacts with F-actin. Interacts with KBTBD10. Interacts with ANKRD54.

The protein resides in the cytoplasm. Its subcellular location is the cell cortex. The protein localises to the cytoskeleton. Plays an important role in the regulation of dynamic actin-based, cytoskeletal activities. Agonist-dependent changes in LASP1 phosphorylation may also serve to regulate actin-associated ion transport activities, not only in the parietal cell but also in certain other F-actin-rich secretory epithelial cell types. This is LIM and SH3 domain protein 1 (Lasp1) from Mus musculus (Mouse).